Consider the following 150-residue polypeptide: Arginine repressor (150 aa).

This sequence belongs to the ArgR family.

It is found in the cytoplasm. The protein operates within amino-acid biosynthesis; L-arginine biosynthesis [regulation]. Its function is as follows. Regulates arginine biosynthesis genes. The sequence is that of Arginine repressor from Halothermothrix orenii (strain H 168 / OCM 544 / DSM 9562).